A 109-amino-acid polypeptide reads, in one-letter code: Large ribosomal subunit protein uL22 (109 aa).

It belongs to the universal ribosomal protein uL22 family. Part of the 50S ribosomal subunit.

In terms of biological role, this protein binds specifically to 23S rRNA; its binding is stimulated by other ribosomal proteins, e.g. L4, L17, and L20. It is important during the early stages of 50S assembly. It makes multiple contacts with different domains of the 23S rRNA in the assembled 50S subunit and ribosome. The globular domain of the protein is located near the polypeptide exit tunnel on the outside of the subunit, while an extended beta-hairpin is found that lines the wall of the exit tunnel in the center of the 70S ribosome. In Dechloromonas aromatica (strain RCB), this protein is Large ribosomal subunit protein uL22.